Consider the following 253-residue polypeptide: Polyprenal reductase (253 aa).

4 helical membrane-spanning segments follow: residues 18–38 (LSFF…PEFL), 78–98 (FLSL…IIFG), 123–143 (HYLV…ISLY), and 200–220 (IIYS…VWVI).

The protein belongs to the steroid 5-alpha reductase family. Polyprenal reductase subfamily.

It localises to the endoplasmic reticulum membrane. The enzyme catalyses a di-trans,poly-cis-dolichal + NADP(+) = a di-trans,poly-cis-polyprenal + NADPH + H(+). Its pathway is protein modification; protein glycosylation. Its function is as follows. Plays a key role in early steps of protein N-linked glycosylation by being involved in the conversion of polyprenol into dolichol. Acts as a polyprenal reductase that mediates the reduction of polyprenal into dolichal in a NADP-dependent mechanism. Dolichols are required for the synthesis of dolichol-linked monosaccharides and the oligosaccharide precursor used for N-glycosylation. This is Polyprenal reductase from Saccharomyces cerevisiae (strain ATCC 204508 / S288c) (Baker's yeast).